Consider the following 122-residue polypeptide: Ribosome-binding factor A (122 aa).

It belongs to the RbfA family. As to quaternary structure, monomer. Binds 30S ribosomal subunits, but not 50S ribosomal subunits or 70S ribosomes.

It localises to the cytoplasm. Functionally, one of several proteins that assist in the late maturation steps of the functional core of the 30S ribosomal subunit. Associates with free 30S ribosomal subunits (but not with 30S subunits that are part of 70S ribosomes or polysomes). Required for efficient processing of 16S rRNA. May interact with the 5'-terminal helix region of 16S rRNA. In Opitutus terrae (strain DSM 11246 / JCM 15787 / PB90-1), this protein is Ribosome-binding factor A.